The sequence spans 1286 residues: MNKAYSIIWSHSRQAWIVASELARGHGFVLAKNTLLVLAVVSTIGNAFAVNISGTVSSGGTVSSGETQIVYSGRGNSNATVNSGGTQIVNNGGKTTATTVNSSGSQNVGTSGATISTIVNSGGIQRVSSGGVASATNLSGGAQNIYNLGHASNTVIFSGGNQTIFSGGITDSTNISSGGQQRVSSGGVASNTTINSSGAQNILSEEGAISTHISSGGNQYISAGANATETIVNSGGFQRVNSGAVATGTVLSGGTQNVSSGGSAISTSVYNSGVQTVFAGATVTDTTVNSGGNQNISSGGIVSETTVNVSGTQNIYSGGSALSANIKGSQIVNSEGTAINTLVSDGGYQHIRNGGIASGTIVNQSGYVNISSGGYAESTIINSGGTLRVLSDGYARGTILNNSGRENVSNGGVSYNAMINTGGNQYIYSDGEATAAIVNTSGFQRINSGGTAPVQNSVVVTRTVSSAAKPFDAEVYSGGKQTVYLWRGIWYSNFLTAVWSMFPGTASGANVNLSGRLNAFAGNVVGTILNQEGRQYVYSGATATSTVGNNEGREYVLSGGITDGTVLNSGGLQAVSSGGKASATVINEGGAQFVYDGGQVTGTNIKNGGTIRVDSGASALNIALSSGGNLFTSTGATLPELTTMAALSVSQNHASNIVLENGGLLRVTSGGTATDTTVNSAGRLRIDDGGTINGTTTINADGIVAGTNIQNDGNFILNLAENYDFETELSGSGVLVKDNTGIMTYAGTLTQAQGVNVKNGGIIFDSAVVNADMAVNQNAYINISDQATINGSVNNNGSIVINNSIINGNITNDADLSFGTAKLLSATVNGSLVNNKNIILNPTKESAGNTLTVSNYTGTPGSVISLGGVLEGDNSLTDRLVVKGNTSGQSDIVYVNEDGSGGQTRDGINIISVEGNSDAEFSLKNRVVAGAYDYTLQKGNESGTDNKGWYLTSHLPTSDTRQYRPENGSYATNMALANSLFLMDLNERKQFRAMSDNTQPESASVWMKITGGISSGKLNDGQNKTTTNQFINQLGGDIYKFHAEQLGDFTLGIMGGYANAKGKTINYTSNKAARNTLDGYSVGVYGTWYQNGENATGLFAETWMQYNWFNASVKGDGLEEEKYNLNGLTASAGGGYNLNVHTWTSPEGITGEFWLQPHLQAVWMGVTPDTHQEDNGTVVQGAGKNNIQTKAGIRASWKVKSTLDKDTGRRFRPYIEANWIHNTHEFGVKMSDDSQLLSGSRNQGEIKTGIEGVITQNLSVNGGVAYQAGGHGSNAISGALGIKYSF.

The first 49 residues, 1–49, serve as a signal peptide directing secretion; it reads MNKAYSIIWSHSRQAWIVASELARGHGFVLAKNTLLVLAVVSTIGNAFA. 3 O-alpha-linked (glycero-D-manno-heptose) serine glycosylation sites follow: S102, S111, and S116. O-alpha-linked (glycero-D-manno-heptose) threonine glycosylation is present at T154. O-alpha-linked (glycero-D-manno-heptose) serine glycans are attached at residues S242, S252, S334, S391, S409, S539, S545, S558, S569, S576, S577, and S582. In terms of domain architecture, Autotransporter spans 998–1286; sequence TQPESASVWM…SGALGIKYSF (289 aa). A beta stranded transmembrane segment spans residues 1006–1012; it reads WMKITGG. Topologically, residues 1013-1029 are extracellular; it reads ISSGKLNDGQNKTTTNQ. The chain crosses the membrane as a beta stranded span at residues 1030 to 1040; that stretch reads FINQLGGDIYK. Topologically, residues 1041-1047 are periplasmic; sequence FHAEQLG. The chain crosses the membrane as a beta stranded span at residues 1048–1058; it reads DFTLGIMGGYA. Topologically, residues 1059 to 1079 are extracellular; that stretch reads NAKGKTINYTSNKAARNTLDG. Residues 1080 to 1087 traverse the membrane as a beta stranded segment; that stretch reads YSVGVYGT. Topologically, residues 1088 to 1097 are periplasmic; that stretch reads WYQNGENATG. The chain crosses the membrane as a beta stranded span at residues 1098 to 1108; the sequence is LFAETWMQYNW. Topologically, residues 1109 to 1126 are extracellular; that stretch reads FNASVKGDGLEEEKYNLN. A beta stranded transmembrane segment spans residues 1127–1138; the sequence is GLTASAGGGYNL. Topologically, residues 1139–1152 are periplasmic; it reads NVHTWTSPEGITGE. A beta stranded transmembrane segment spans residues 1153 to 1164; that stretch reads FWLQPHLQAVWM. The Extracellular portion of the chain corresponds to 1165–1186; the sequence is GVTPDTHQEDNGTVVQGAGKNN. Residues 1187–1198 traverse the membrane as a beta stranded segment; the sequence is IQTKAGIRASWK. Residues 1199–1210 are Periplasmic-facing; sequence VKSTLDKDTGRR. The chain crosses the membrane as a beta stranded span at residues 1211–1221; the sequence is FRPYIEANWIH. Over 1222–1242 the chain is Extracellular; that stretch reads NTHEFGVKMSDDSQLLSGSRN. A beta stranded transmembrane segment spans residues 1243 to 1253; it reads QGEIKTGIEGV. The Periplasmic segment spans residues 1254–1259; sequence ITQNLS. Residues 1260 to 1267 traverse the membrane as a beta stranded segment; that stretch reads VNGGVAYQ. Residues 1268–1275 are Extracellular-facing; it reads AGGHGSNA. A beta stranded membrane pass occupies residues 1276 to 1284; the sequence is ISGALGIKY. Over 1285-1286 the chain is Periplasmic; sequence SF.

Intercellular AIDA-AIDA interaction is responsible for bacterial autoaggregation. AIDA can also interact with antigen 43 (Ag43), and the resultant intercellular AIDA-Ag43 interaction causes cell aggregation. Post-translationally, glycosylated on serine residues by AHH and AAH2 in the cytoplasm. Glycosylated with an average of 19 heptose residues. Glycosylated with either ADP-L, D-heptose or ADP-D, D-heptose. Glycosylation is required for protein folding/stabilization and resistance to protease-mediated degradation. Glycosylation is required for bacteria adhesion to mammalian cells. Glycosylation is dispensable for cell outer membrane localization. Glycosylation is dispensable for AIDA-mediated cell-cell aggregation and induction of biofilm formation. Glycosylation is dispensable for interaction with Ag43.

The protein localises to the periplasm. It is found in the secreted. Its subcellular location is the cell surface. The protein resides in the cell outer membrane. Its function is as follows. Potent bacterial adhesin that mediates bacterial attachment to a broad variety of human and other mammalian cells. Has additional virulence properties, as it is capable of mediating bacterial autoaggregation via intercellular self-recognition and it is a highly efficient initiator of biofilm formation. The protein is Autotransporter adhesin AIDA-I (aidA) of Escherichia coli.